Reading from the N-terminus, the 182-residue chain is FMN reductase (NADH) RutF (182 aa).

It belongs to the non-flavoprotein flavin reductase family. RutF subfamily.

The catalysed reaction is FMNH2 + NAD(+) = FMN + NADH + 2 H(+). Catalyzes the reduction of FMN to FMNH2 which is used to reduce pyrimidine by RutA via the Rut pathway. The chain is FMN reductase (NADH) RutF from Yersinia enterocolitica serotype O:8 / biotype 1B (strain NCTC 13174 / 8081).